The following is a 220-amino-acid chain: Probable GTP-binding protein EngB (220 aa).

An EngB-type G domain is found at 24–207 (PQPEVAFAGR…HELIESWIAP (184 aa)). GTP contacts are provided by residues 32 to 39 (GRSNAGKS), 59 to 63 (GRTQH), 81 to 84 (DLPG), 148 to 151 (TKCD), and 185 to 188 (LFSA). Positions 39 and 61 each coordinate Mg(2+).

It belongs to the TRAFAC class TrmE-Era-EngA-EngB-Septin-like GTPase superfamily. EngB GTPase family. Mg(2+) is required as a cofactor.

Its function is as follows. Necessary for normal cell division and for the maintenance of normal septation. In Paraburkholderia phymatum (strain DSM 17167 / CIP 108236 / LMG 21445 / STM815) (Burkholderia phymatum), this protein is Probable GTP-binding protein EngB.